The primary structure comprises 449 residues: Galactosyl transferase CpsE (449 aa).

A run of 5 helical transmembrane segments spans residues 5–22 (VVVY…TPNF), 27–46 (DLLF…DFYR), 59–78 (MVLK…FFIF), 88–107 (SFFT…NSFL), and 258–280 (FLDI…FLVP).

It belongs to the bacterial sugar transferase family.

It localises to the cell membrane. Its function is as follows. Galactosyl transferase is essential for the assembly of the group B streptococci (GBS) type III capsular polysaccharide. May be involved in the formation of either or both galactosidic bonds by catalyzing the addition of galactose to an oligosaccharide precursor or to a lipid intermediate. Type III capsular polysaccharide consists of a linear backbone with short side chains ending in residues of N-acetylneuraminic acid or sialic acid. The presence of sialic acid on the surface of the organism inhibits activation of the alternative pathway of complement and is thought to be an important element in the virulence function of the capsule. The sequence is that of Galactosyl transferase CpsE (cpsE) from Streptococcus agalactiae serotype III (strain NEM316).